The following is a 185-amino-acid chain: Ribosome-recycling factor (185 aa).

The protein belongs to the RRF family.

It is found in the cytoplasm. Functionally, responsible for the release of ribosomes from messenger RNA at the termination of protein biosynthesis. May increase the efficiency of translation by recycling ribosomes from one round of translation to another. The polypeptide is Ribosome-recycling factor (Bacillus cytotoxicus (strain DSM 22905 / CIP 110041 / 391-98 / NVH 391-98)).